The primary structure comprises 367 residues: Mitochondrial distribution and morphology protein 34 (367 aa).

Residues 1-197 form the SMP-LTD domain; sequence MSFNFTWPEF…LPSIIHRLSQ (197 aa). Disordered stretches follow at residues 267–311 and 347–367; these read QGLK…ALSS and PAHR…FHLS. Residues 286-302 show a composition bias toward polar residues; that stretch reads FHTTSRVRVPSSLESNA.

It belongs to the MDM34 family. As to quaternary structure, component of the ER-mitochondria encounter structure (ERMES) or MDM complex, composed of MMM1, MDM10, MDM12 and MDM34.

Its subcellular location is the mitochondrion outer membrane. Functionally, component of the ERMES/MDM complex, which serves as a molecular tether to connect the endoplasmic reticulum (ER) and mitochondria. Components of this complex are involved in the control of mitochondrial shape and protein biogenesis, and function in nonvesicular lipid trafficking between the ER and mitochondria. MDM34 is required for the interaction of the ER-resident membrane protein MMM1 and the outer mitochondrial membrane-resident beta-barrel protein MDM10. This is Mitochondrial distribution and morphology protein 34 from Malassezia globosa (strain ATCC MYA-4612 / CBS 7966) (Dandruff-associated fungus).